The chain runs to 470 residues: 3-isopropylmalate dehydratase large subunit (470 aa).

[4Fe-4S] cluster is bound by residues cysteine 348, cysteine 409, and cysteine 412.

This sequence belongs to the aconitase/IPM isomerase family. LeuC type 1 subfamily. In terms of assembly, heterodimer of LeuC and LeuD. Requires [4Fe-4S] cluster as cofactor.

It carries out the reaction (2R,3S)-3-isopropylmalate = (2S)-2-isopropylmalate. Its pathway is amino-acid biosynthesis; L-leucine biosynthesis; L-leucine from 3-methyl-2-oxobutanoate: step 2/4. Its function is as follows. Catalyzes the isomerization between 2-isopropylmalate and 3-isopropylmalate, via the formation of 2-isopropylmaleate. The protein is 3-isopropylmalate dehydratase large subunit of Thioalkalivibrio sulfidiphilus (strain HL-EbGR7).